Consider the following 321-residue polypeptide: UDP-3-O-acylglucosamine N-acyltransferase (321 aa).

H231 (proton acceptor) is an active-site residue.

Belongs to the transferase hexapeptide repeat family. LpxD subfamily. As to quaternary structure, homotrimer.

It carries out the reaction a UDP-3-O-[(3R)-3-hydroxyacyl]-alpha-D-glucosamine + a (3R)-hydroxyacyl-[ACP] = a UDP-2-N,3-O-bis[(3R)-3-hydroxyacyl]-alpha-D-glucosamine + holo-[ACP] + H(+). Its pathway is bacterial outer membrane biogenesis; LPS lipid A biosynthesis. Its function is as follows. Catalyzes the N-acylation of UDP-3-O-acylglucosamine using 3-hydroxyacyl-ACP as the acyl donor. Is involved in the biosynthesis of lipid A, a phosphorylated glycolipid that anchors the lipopolysaccharide to the outer membrane of the cell. In Campylobacter jejuni subsp. jejuni serotype O:2 (strain ATCC 700819 / NCTC 11168), this protein is UDP-3-O-acylglucosamine N-acyltransferase.